Here is a 301-residue protein sequence, read N- to C-terminus: Mitochondrial thiamine pyrophosphate carrier 1 (301 aa).

3 Solcar repeats span residues 15–102 (VTPT…ISKS), 115–200 (SSAN…AREL), and 206–293 (RVPF…SLSF). 6 consecutive transmembrane segments (helical) span residues 20–38 (ALVA…TAPL), 79–99 (VPAE…YSII), 121–141 (LIVG…FDLL), 172–192 (IYAG…LMFW), 207–227 (VPFI…GITF), and 252–272 (IFVT…FGIS).

The protein belongs to the mitochondrial carrier (TC 2.A.29) family.

The protein resides in the mitochondrion inner membrane. Mitochondrial transporter that mediates uptake of thiamine pyrophosphate (ThPP) into mitochondria. In Candida albicans (strain SC5314 / ATCC MYA-2876) (Yeast), this protein is Mitochondrial thiamine pyrophosphate carrier 1 (TPC1).